A 281-amino-acid chain; its full sequence is sn-glycerol-3-phosphate transport system permease protein UgpE (281 aa).

6 helical membrane passes run 16–36, 85–105, 113–133, 142–162, 202–222, and 247–267; these read LILG…AATL, FSIT…IVWF, FFWM…FPTV, LDSY…TFLF, ALFV…LLII, and WNSV…IVLV. The ABC transmembrane type-1 domain occupies 77 to 268; that stretch reads LLNSFVMAFS…IPPVVIVLVM (192 aa).

It belongs to the binding-protein-dependent transport system permease family. UgpAE subfamily. The complex is composed of two ATP-binding proteins (UgpC), two transmembrane proteins (UgpA and UgpE) and a solute-binding protein (UgpB).

It is found in the cell inner membrane. In terms of biological role, part of the ABC transporter complex UgpBAEC involved in sn-glycerol-3-phosphate (G3P) import. Probably responsible for the translocation of the substrate across the membrane. The sequence is that of sn-glycerol-3-phosphate transport system permease protein UgpE (ugpE) from Escherichia coli O157:H7.